Reading from the N-terminus, the 933-residue chain is Progesterone receptor (933 aa).

Residues 1 to 164 (MTELKAKGPR…PATQGVLSPL (164 aa)) are AF3; mediates transcriptional activation. The tract at residues 1 to 256 (MTELKAKGPR…AAAGGGAAAV (256 aa)) is disordered. Positions 1-566 (MTELKAKGPR…YSFESLPQKI (566 aa)) are modulating, Pro-Rich. Position 20 is a phosphoserine (Ser-20). The short motif at 55–59 (LDGLL) is the LXXL motif 1 element. A Phosphoserine modification is found at Ser-81. The LXXL motif 2 signature appears at 115-119 (LDTLL). Ser-130 and Ser-162 each carry phosphoserine. Residues 165–305 (MSRSGCKAGD…LATTMMDFIH (141 aa)) are mediates transcriptional transrepression. The Nuclear localization signal motif lies at 183–187 (KVLPR). Phosphoserine occurs at positions 190 and 213. Over residues 220–231 (EVEEEDGSESEE) the composition is skewed to acidic residues. Residues 232–246 (SAGPLLKGKPRALGG) are compositionally biased toward low complexity. Residue Ser-294 is modified to Phosphoserine; by MAPK1. Residues 331-378 (GGAGAASAFAPPRSSPSASSTPVAVGDFPDCAYPPDAEPKDDAYPLYS) are disordered. Residues 335 to 350 (AASAFAPPRSSPSASS) show a composition bias toward low complexity. Ser-345 carries the post-translational modification Phosphoserine; by MAPK. Residue Lys-388 forms a Glycyl lysine isopeptide (Lys-Gly) (interchain with G-Cter in SUMO); alternate linkage. Lys-388 is covalently cross-linked (Glycyl lysine isopeptide (Lys-Gly) (interchain with G-Cter in ubiquitin); alternate). The residue at position 400 (Ser-400) is a Phosphoserine; by CDK2. Residues 415–452 (PDFPLGPPPPLPPRAPPSRPGEAAVTAAPASASVSSAS) are disordered. Residues 418 to 433 (PLGPPPPLPPRAPPSR) show a composition bias toward pro residues. Positions 434–452 (PGEAAVTAAPASASVSSAS) are enriched in low complexity. The segment at 456 to 546 (STLECILYKA…VYPPYLNYLR (91 aa)) is AF1; mediates transcriptional activation. Lys-531 participates in a covalent cross-link: Glycyl lysine isopeptide (Lys-Gly) (interchain with G-Cter in SUMO). 2 NR C4-type zinc fingers span residues 567–587 (CLIC…CGSC) and 603–627 (CAGR…LRKC). A DNA-binding region (nuclear receptor) is located at residues 567-639 (CLICGDEASG…AGMVLGGRKF (73 aa)). Ser-676 carries the phosphoserine modification. An NR LBD domain is found at 679-913 (QDIQLIPPLI…EFPEMMSEVI (235 aa)). The tract at residues 687–933 (LINLLMSIEP…MVKPLLFHKK (247 aa)) is AF2; mediates transcriptional activation. Progesterone is bound at residue Arg-766.

Belongs to the nuclear hormone receptor family. In terms of assembly, interacts with SMARD1 and UNC45A. Interacts with CUEDC2; the interaction promotes ubiquitination, decreases sumoylation, and represses transcriptional activity. Interacts with PIAS3; the interaction promotes sumoylation of PR in a hormone-dependent manner, inhibits DNA-binding, and alters nuclear export. Interacts with SP1; the interaction requires ligand-induced phosphorylation on Ser-345 by ERK1/2-MAPK. Interacts with PRMT2. Interacts with NCOA2 and NCOA1. Interacts with KLF9. Interacts with GTF2B. Post-translationally, phosphorylated on multiple serine sites. Several of these sites are hormone-dependent. Phosphorylation on Ser-294 is highly hormone-dependent and modulates ubiquitination and sumoylation on Lys-388. Phosphorylation on Ser-102 and Ser-345 also requires induction by hormone. Basal phosphorylation on Ser-81, Ser-162, Ser-190 and Ser-400 is increased in response to progesterone and can be phosphorylated in vitro by the CDK2-A1 complex. Increased levels of phosphorylation on Ser-400 also in the presence of EGF, heregulin, IGF, PMA and FBS. Phosphorylation at this site by CDK2 is ligand-independent, and increases nuclear translocation and transcriptional activity. Phosphorylation at Ser-162 and Ser-294, but not at Ser-190, is impaired during the G(2)/M phase of the cell cycle. Phosphorylation on Ser-345 by ERK1/2 MAPK is required for interaction with SP1. Sumoylation is hormone-dependent and represses transcriptional activity. Sumoylation on all three sites is enhanced by PIAS3. Desumoylated by SENP1. Sumoylation on Lys-388, the main site of sumoylation, is repressed by ubiquitination on the same site, and modulated by phosphorylation at Ser-294. In terms of processing, ubiquitination is hormone-dependent and represses sumoylation on the same site. Promoted by MAPK-mediated phosphorylation on Ser-294. Ubiquitinated by UBR5, leading to its degradation: UBR5 specifically recognizes and binds ligand-bound PGR when it is not associated with coactivators (NCOAs). In presence of NCOAs, the UBR5-degron is not accessible, preventing its ubiquitination and degradation. Post-translationally, palmitoylated by ZDHHC7 and ZDHHC21. Palmitoylation is required for plasma membrane targeting and for rapid intracellular signaling via ERK and AKT kinases and cAMP generation.

The protein localises to the nucleus. The protein resides in the cytoplasm. Its function is as follows. The steroid hormones and their receptors are involved in the regulation of eukaryotic gene expression and affect cellular proliferation and differentiation in target tissues. Transcriptional activator of several progesteron-dependent promoters in a variety of cell types. Involved in activation of SRC-dependent MAPK signaling on hormone stimulation. The chain is Progesterone receptor (PGR) from Pan paniscus (Pygmy chimpanzee).